Here is a 305-residue protein sequence, read N- to C-terminus: Ribonuclease HIII (305 aa).

The 215-residue stretch at 91-305 folds into the RNase H type-2 domain; that stretch reads WSVIGSDEVG…ANTQKAQKLL (215 aa). A divalent metal cation is bound by residues aspartate 97, glutamate 98, and aspartate 201.

It belongs to the RNase HII family. RnhC subfamily. The cofactor is Mn(2+). Mg(2+) serves as cofactor.

It is found in the cytoplasm. It catalyses the reaction Endonucleolytic cleavage to 5'-phosphomonoester.. Functionally, endonuclease that specifically degrades the RNA of RNA-DNA hybrids. This chain is Ribonuclease HIII, found in Enterococcus faecalis (strain ATCC 700802 / V583).